The following is a 108-amino-acid chain: Nucleoid-associated protein Lcho_1975 (108 aa).

The protein belongs to the YbaB/EbfC family. As to quaternary structure, homodimer.

The protein resides in the cytoplasm. Its subcellular location is the nucleoid. Functionally, binds to DNA and alters its conformation. May be involved in regulation of gene expression, nucleoid organization and DNA protection. The chain is Nucleoid-associated protein Lcho_1975 from Leptothrix cholodnii (strain ATCC 51168 / LMG 8142 / SP-6) (Leptothrix discophora (strain SP-6)).